The following is a 342-amino-acid chain: Inositol-tetrakisphosphate 1-kinase 5 (342 aa).

1D-myo-inositol 1,3,4-trisphosphate is bound by residues lysine 25 and lysine 67. Arginine 102 and lysine 154 together coordinate ATP. Positions 165 and 197 each coordinate 1D-myo-inositol 1,3,4-trisphosphate. ATP-binding positions include 186–197 and serine 212; that span reads QEFVNHGGVIFK. Positions 283, 298, and 300 each coordinate Mg(2+). Asparagine 300 serves as a coordination point for 1D-myo-inositol 1,3,4-trisphosphate.

It belongs to the ITPK1 family. Monomer. The cofactor is Mg(2+). As to expression, expressed in roots, leaves, flowers, anthers and embryos.

It carries out the reaction 1D-myo-inositol 3,4,5,6-tetrakisphosphate + ATP = 1D-myo-inositol 1,3,4,5,6-pentakisphosphate + ADP + H(+). It catalyses the reaction 1D-myo-inositol 1,3,4-trisphosphate + ATP = 1D-myo-inositol 1,3,4,5-tetrakisphosphate + ADP + H(+). The enzyme catalyses 1D-myo-inositol 1,3,4-trisphosphate + ATP = 1D-myo-inositol 1,3,4,6-tetrakisphosphate + ADP + H(+). Kinase that can phosphorylate various inositol polyphosphate such as Ins(3,4,5,6)P4 or Ins(1,3,4)P3 and participates in phytic acid biosynthesis in developing seeds. Phytic acid is the primary storage form of phosphorus in cereal grains and other plant seeds. The polypeptide is Inositol-tetrakisphosphate 1-kinase 5 (ITPK5) (Oryza sativa subsp. japonica (Rice)).